A 180-amino-acid polypeptide reads, in one-letter code: 4-hydroxy-3-methylbut-2-enyl diphosphate reductase (180 aa).

A [4Fe-4S] cluster-binding site is contributed by cysteine 12. Positions 41 and 74 each coordinate (2E)-4-hydroxy-3-methylbut-2-enyl diphosphate. Dimethylallyl diphosphate contacts are provided by histidine 41 and histidine 74. Residues histidine 41 and histidine 74 each contribute to the isopentenyl diphosphate site. Cysteine 96 contributes to the [4Fe-4S] cluster binding site. Histidine 124 contacts (2E)-4-hydroxy-3-methylbut-2-enyl diphosphate. Histidine 124 lines the dimethylallyl diphosphate pocket. Histidine 124 contacts isopentenyl diphosphate. Glutamate 126 acts as the Proton donor in catalysis. Threonine 168 provides a ligand contact to (2E)-4-hydroxy-3-methylbut-2-enyl diphosphate.

The protein belongs to the IspH family. It depends on [4Fe-4S] cluster as a cofactor.

The enzyme catalyses isopentenyl diphosphate + 2 oxidized [2Fe-2S]-[ferredoxin] + H2O = (2E)-4-hydroxy-3-methylbut-2-enyl diphosphate + 2 reduced [2Fe-2S]-[ferredoxin] + 2 H(+). It catalyses the reaction dimethylallyl diphosphate + 2 oxidized [2Fe-2S]-[ferredoxin] + H2O = (2E)-4-hydroxy-3-methylbut-2-enyl diphosphate + 2 reduced [2Fe-2S]-[ferredoxin] + 2 H(+). Its pathway is isoprenoid biosynthesis; dimethylallyl diphosphate biosynthesis; dimethylallyl diphosphate from (2E)-4-hydroxy-3-methylbutenyl diphosphate: step 1/1. The protein operates within isoprenoid biosynthesis; isopentenyl diphosphate biosynthesis via DXP pathway; isopentenyl diphosphate from 1-deoxy-D-xylulose 5-phosphate: step 6/6. Its function is as follows. Catalyzes the conversion of 1-hydroxy-2-methyl-2-(E)-butenyl 4-diphosphate (HMBPP) into a mixture of isopentenyl diphosphate (IPP) and dimethylallyl diphosphate (DMAPP). Acts in the terminal step of the DOXP/MEP pathway for isoprenoid precursor biosynthesis. The sequence is that of 4-hydroxy-3-methylbut-2-enyl diphosphate reductase from Pseudomonas fluorescens.